The primary structure comprises 290 residues: MEGLVVKNYAGFYYVDTGKAIYMCKARGKFKKDNIKILTGDRVIIRELVPNSEGVIESLLPRKNELIRPPIANVDQVLLVFAFADPFPSTELIDRLLVMAYALRLEVVLVFNKFDLVNPESQKLFEYYKKILPKVVAITARGDTGIDELTDYLNQKISVLAGPSGVGKSTLINRLVPGAKLATGEVSPKIKRGRHTTRHVELIKLPFGGFIADTPGFSNLTLPEMDKLELQSYFPEFNQNRKYCYFPNCLHVKEPNCRVRELLETGEIPPFRYENYLTFLEEITSDERSS.

The CP-type G domain maps to 63–220 (KNELIRPPIA…IADTPGFSNL (158 aa)). GTP contacts are provided by residues 112-115 (NKFD) and 162-170 (GPSGVGKST). Positions 244, 249, 251, and 257 each coordinate Zn(2+).

Belongs to the TRAFAC class YlqF/YawG GTPase family. RsgA subfamily. Monomer. Associates with 30S ribosomal subunit, binds 16S rRNA. Requires Zn(2+) as cofactor.

The protein localises to the cytoplasm. Functionally, one of several proteins that assist in the late maturation steps of the functional core of the 30S ribosomal subunit. Helps release RbfA from mature subunits. May play a role in the assembly of ribosomal proteins into the subunit. Circularly permuted GTPase that catalyzes slow GTP hydrolysis, GTPase activity is stimulated by the 30S ribosomal subunit. This Carboxydothermus hydrogenoformans (strain ATCC BAA-161 / DSM 6008 / Z-2901) protein is Small ribosomal subunit biogenesis GTPase RsgA.